Reading from the N-terminus, the 518-residue chain is Centromere protein T (518 aa).

Residues 1 to 70 (MADLSSPDGD…RKHSHGTGSV (70 aa)) form a disordered region. Over residues 19–28 (HVLDTADSHT) the composition is skewed to basic and acidic residues. Positions 34–57 (STQTNPQRRRSQTPYSKRQGSQRK) are enriched in polar residues. At threonine 86 the chain carries Phosphothreonine. The interval 94 to 381 (ILLTAPESST…EPHQLFEPPP (288 aa)) is flexible stalk domain. Disordered regions lie at residues 102–156 (STVM…KRKQ), 271–362 (VHHS…ELSS), and 375–412 (QLFE…HQDP). The span at 294-306 (TPSTGTRPQSQMS) shows a compositional bias: polar residues. 7 positions are modified to phosphoserine: serine 313, serine 324, serine 333, serine 345, serine 346, serine 357, and serine 382. Over residues 326-343 (ELREAVGSKEAEEPKDLE) the composition is skewed to basic and acidic residues. The span at 384 to 395 (GVAAVSSESVPA) shows a compositional bias: low complexity.

This sequence belongs to the CENP-T/CNN1 family. Component of the CENPA-CAD complex, composed of CENPI, CENPK, CENPL, CENPO, CENPP, CENPQ, CENPR and CENPS. The CENPA-CAD complex is probably recruited on centromeres by the CENPA-NAC complex, at least composed of CENPA, CENPC, CENPH, CENPM, CENPN, CENPT and CENPU. Identified in a centromeric complex containing histones H2A, H2B, H3 and H4, and at least CENPA, CENPB, CENPC, CENPT, CENPN, HJURP, SUPT16H, SSRP1 and RSF1. Interacts (via N-terminus) with the NDC80 complex. Heterodimer with CENPW; this dimer coassembles with CENPS-CENPX heterodimers at centromeres to form the tetrameric CENP-T-W-S-X complex. Dynamically phosphorylated during the cell cycle. Phosphorylated during G2 phase, metaphase and anaphase, but not during telophase or G1 phase.

It localises to the nucleus. The protein resides in the chromosome. Its subcellular location is the centromere. It is found in the kinetochore. Its function is as follows. Component of the CENPA-NAC (nucleosome-associated) complex, a complex that plays a central role in assembly of kinetochore proteins, mitotic progression and chromosome segregation. The CENPA-NAC complex recruits the CENPA-CAD (nucleosome distal) complex and may be involved in incorporation of newly synthesized CENPA into centromeres. Part of a nucleosome-associated complex that binds specifically to histone H3-containing nucleosomes at the centromere, as opposed to nucleosomes containing CENPA. Component of the heterotetrameric CENP-T-W-S-X complex that binds and supercoils DNA, and plays an important role in kinetochore assembly. CENPT has a fundamental role in kinetochore assembly and function. It is one of the inner kinetochore proteins, with most further proteins binding downstream. Required for normal chromosome organization and normal progress through mitosis. In Rattus norvegicus (Rat), this protein is Centromere protein T (Cenpt).